A 285-amino-acid polypeptide reads, in one-letter code: Non-homologous end joining protein Ku (285 aa).

In terms of domain architecture, Ku spans 9–176; it reads ISFGLVNVPV…PAEIRHLEAS (168 aa). Residues 250–285 are disordered; the sequence is AMTDQKKQQNTAESETEEKPTKSTLTPRGRRKVKGA.

Belongs to the prokaryotic Ku family. Homodimer. Interacts with LigD.

In terms of biological role, with LigD forms a non-homologous end joining (NHEJ) DNA repair enzyme, which repairs dsDNA breaks with reduced fidelity. Binds linear dsDNA with 5'- and 3'- overhangs but not closed circular dsDNA nor ssDNA. Recruits and stimulates the ligase activity of LigD. The sequence is that of Non-homologous end joining protein Ku from Desulfitobacterium hafniense (strain DSM 10664 / DCB-2).